A 746-amino-acid chain; its full sequence is Proline--tRNA ligase (746 aa).

The required for editing of incorrectly charged tRNA stretch occupies residues 1–223 (MNNNTNGEII…NSNNNNNNNN (223 aa)). Residues 181–201 (TSKARVDKKEDVQEEMAKNEE) show a composition bias toward basic and acidic residues. A disordered region spans residues 181–226 (TSKARVDKKEDVQEEMAKNEELQNNNNNNKNNSNSNNNNNNNNNHI). Residues 204–224 (NNNNNNKNNSNSNNNNNNNNN) are compositionally biased toward low complexity. Arg-390 serves as a coordination point for L-proline. Residues 390 to 394 (RWEFK), 401 to 405 (RTREF), and 475 to 477 (QAA) contribute to the ATP site. Residue His-480 coordinates L-proline. 512–514 (TTR) contacts ATP.

Belongs to the class-II aminoacyl-tRNA synthetase family. ProS type 3 subfamily. Homodimer.

The protein localises to the cytoplasm. It catalyses the reaction tRNA(Pro) + L-proline + ATP = L-prolyl-tRNA(Pro) + AMP + diphosphate. With respect to regulation, inhibited by the quinazolinone-based compound febrifugine from the Chinese plant Dichroa febrifuga which is used to treat malaria-associated fever. Also inhibited by febrifugine derivatives such as halofuginone. Its function is as follows. Catalyzes the attachment of proline to tRNA(Pro) in a two-step reaction: proline is first activated by ATP to form Pro-AMP and then transferred to the acceptor end of tRNA(Pro). Functions in trans to edit the amino acid moiety from incorrectly charged Ala-tRNA(Pro). Has no activity on correctly charged Pro-tRNA(Pro) or Ala-tRNA(Ala). The sequence is that of Proline--tRNA ligase from Plasmodium falciparum (isolate 3D7).